We begin with the raw amino-acid sequence, 1112 residues long: Plasma membrane calcium-transporting ATPase 2 (1112 aa).

Residues 1–94 are Cytoplasmic-facing; that stretch reads MGDMSNSDFY…NLIPPKKPKT (94 aa). Residues 95-115 traverse the membrane as a helical segment; it reads FLQLVWEALQDVTLIILEIAA. The Extracellular portion of the chain corresponds to 116–152; the sequence is LISLGLSFYHPPGETGGESCGAAAGGVEDEGEADAGW. Residues 153-173 form a helical membrane-spanning segment; the sequence is IEGAAILLSVVCVVLVTAFND. Residues 174–373 are Cytoplasmic-facing; sequence WSKEKQFRGL…KEKSVLQGKL (200 aa). Positions 298-311 are enriched in basic and acidic residues; the sequence is EKKEKKGGAVEDGH. The interval 298-363 is disordered; that stretch reads EKKEKKGGAV…KERKKVSAPK (66 aa). Polar residues predominate over residues 312–327; that stretch reads QNTGKMQDGNMESNQI. Residues 351-363 show a composition bias toward basic and acidic residues; it reads ADEKERKKVSAPK. Residues 374 to 393 form a helical membrane-spanning segment; the sequence is TKLAVQIGKAGLLMSAITVI. Residues 394 to 426 are Extracellular-facing; that stretch reads ILVLYFAIDNFVMQKRPWMPECTPIYIQYFVKF. Residues 427 to 444 form a helical membrane-spanning segment; sequence FIIGVTVLVVAVPEGLPL. The Cytoplasmic portion of the chain corresponds to 445 to 858; the sequence is AVTISLAYSV…MWGRNVYDSI (414 aa). The 4-aspartylphosphate intermediate role is filled by Asp-482. Residues Asp-803 and Asp-807 each contribute to the Mg(2+) site. Residues 859–878 traverse the membrane as a helical segment; the sequence is SKFLQFQLTVNVVAVIVAFT. At 879–888 the chain is on the extracellular side; the sequence is GACITQDSPL. A helical transmembrane segment spans residues 889-909; it reads KAVQMLWVNLIMDTFASLALA. The Cytoplasmic portion of the chain corresponds to 910–929; the sequence is TEPPTESLLKRKPYGRNKPL. The chain crosses the membrane as a helical span at residues 930–952; it reads ISSTMTKNILGHGVYQLIIIFTL. The Extracellular segment spans residues 953-970; sequence LFVGEQIFDIDSGRNAPL. Residues 971–992 traverse the membrane as a helical segment; that stretch reads HSPPSEHYTIIFNTFVMMQLFN. Residues 993–1011 lie on the Cytoplasmic side of the membrane; it reads EINARKIHGERNVFDGIFR. The helical transmembrane segment at 1012–1033 threads the bilayer; it reads NPIFCSIVFGTFAVQIVIVQFG. The Extracellular segment spans residues 1034-1043; it reads GKPFSCQPLD. A helical membrane pass occupies residues 1044-1065; that stretch reads LEKWMWCVFLGLGELVWGQVIA. The Cytoplasmic segment spans residues 1066-1112; sequence TIPNSRLRFLRRAGQLTQKDELPEEDVNEENEEIDHAERELRRGQIL. Positions 1086-1112 are disordered; that stretch reads ELPEEDVNEENEEIDHAERELRRGQIL. Over residues 1087 to 1098 the composition is skewed to acidic residues; the sequence is LPEEDVNEENEE. A compositionally biased stretch (basic and acidic residues) spans 1099-1112; sequence IDHAERELRRGQIL. The calmodulin-binding subdomain A stretch occupies residues 1106–1112; sequence LRRGQIL.

Belongs to the cation transport ATPase (P-type) (TC 3.A.3) family. Type IIB subfamily.

It is found in the cell membrane. It carries out the reaction Ca(2+)(in) + ATP + H2O = Ca(2+)(out) + ADP + phosphate + H(+). In terms of biological role, this magnesium-dependent enzyme catalyzes the hydrolysis of ATP coupled with the transport of calcium out of the cell. This is Plasma membrane calcium-transporting ATPase 2 (atp2b2) from Oreochromis mossambicus (Mozambique tilapia).